Reading from the N-terminus, the 508-residue chain is Photosystem II CP47 reaction center protein (508 aa).

A run of 6 helical transmembrane segments spans residues 21–36 (AVHIMHTALVAGWAGS), 101–115 (ILFSGLCFLAAIWHW), 140–156 (GIHLFLSGLACFGFGAF), 203–218 (IAAGTLGILAGLFHLS), 237–252 (VLSSSIAAVFFAAFVV), and 457–472 (SFALLFFFGHIWHGAR).

This sequence belongs to the PsbB/PsbC family. PsbB subfamily. PSII is composed of 1 copy each of membrane proteins PsbA, PsbB, PsbC, PsbD, PsbE, PsbF, PsbH, PsbI, PsbJ, PsbK, PsbL, PsbM, PsbT, PsbX, PsbY, PsbZ, Psb30/Ycf12, at least 3 peripheral proteins of the oxygen-evolving complex and a large number of cofactors. It forms dimeric complexes. The cofactor is Binds multiple chlorophylls. PSII binds additional chlorophylls, carotenoids and specific lipids..

It is found in the plastid. It localises to the chloroplast thylakoid membrane. Functionally, one of the components of the core complex of photosystem II (PSII). It binds chlorophyll and helps catalyze the primary light-induced photochemical processes of PSII. PSII is a light-driven water:plastoquinone oxidoreductase, using light energy to abstract electrons from H(2)O, generating O(2) and a proton gradient subsequently used for ATP formation. This chain is Photosystem II CP47 reaction center protein, found in Oenothera biennis (German evening primrose).